A 172-amino-acid polypeptide reads, in one-letter code: Capsid protein (172 aa).

Residues 1 to 26 are disordered; sequence MASKWNWSGTKGRRTPRRPYGRPYKS. The segment covering 11–20 has biased composition (basic residues); the sequence is KGRRTPRRPY.

Belongs to the nanoviridae capsid protein family.

The protein resides in the virion. In Faba bean necrotic yellows virus (isolate Egyptian EV1-93) (FBNYV), this protein is Capsid protein (DNA-S).